A 118-amino-acid chain; its full sequence is Ribonuclease P protein component 2 (118 aa).

Belongs to the eukaryotic/archaeal RNase P protein component 2 family. In terms of assembly, consists of a catalytic RNA component and at least 4-5 protein subunits.

The protein resides in the cytoplasm. It catalyses the reaction Endonucleolytic cleavage of RNA, removing 5'-extranucleotides from tRNA precursor.. Functionally, part of ribonuclease P, a protein complex that generates mature tRNA molecules by cleaving their 5'-ends. The sequence is that of Ribonuclease P protein component 2 from Pyrococcus abyssi (strain GE5 / Orsay).